Consider the following 381-residue polypeptide: E3 ubiquitin-protein ligase ATL15 (381 aa).

The first 23 residues, 1 to 23, serve as a signal peptide directing secretion; sequence MVVMSRVSFYSSFLLLLLEVVVA. A helical transmembrane segment spans residues 40–60; the sequence is AIIMIVLVSVFFALGCISVYM. The RING-type; atypical zinc finger occupies 118–160; it reads CPVCLNEFEDDETLRLIPQCCHVFHPGCIDAWLRSQTTCPLCR.

This sequence belongs to the RING-type zinc finger family. ATL subfamily.

Its subcellular location is the membrane. It catalyses the reaction S-ubiquitinyl-[E2 ubiquitin-conjugating enzyme]-L-cysteine + [acceptor protein]-L-lysine = [E2 ubiquitin-conjugating enzyme]-L-cysteine + N(6)-ubiquitinyl-[acceptor protein]-L-lysine.. It participates in protein modification; protein ubiquitination. Functionally, E3 ubiquitin-protein ligase able to catalyze polyubiquitination with ubiquitin-conjugating enzyme E2 UBC8, UBC10, UBC11, UBC28 and UBC29 in vitro. The chain is E3 ubiquitin-protein ligase ATL15 (ATL15) from Arabidopsis thaliana (Mouse-ear cress).